A 178-amino-acid polypeptide reads, in one-letter code: CASP-like protein 2A2 (178 aa).

Over 1–22 the chain is Cytoplasmic; the sequence is MDKTDQTAIDGSALELNRTEKT. Residues 23 to 43 form a helical membrane-spanning segment; that stretch reads VEAVLRVASMALSITGLVIMI. The Extracellular portion of the chain corresponds to 44–69; sequence KNSISNDFGSLSYSNLGAFMYLVGAN. The helical transmembrane segment at 70 to 90 threads the bilayer; that stretch reads GVCAAYSLLSALAILALPCPI. At 91 to 96 the chain is on the cytoplasmic side; the sequence is SKVQVR. Residues 97–117 form a helical membrane-spanning segment; it reads TLFLLDQVVTYVVLAAGAVSA. At 118 to 145 the chain is on the extracellular side; it reads ETVYLAYYGNIPITWSSACDSYGIFCHK. The helical transmembrane segment at 146 to 166 threads the bilayer; that stretch reads ALISVVFTFVVSLLYMLLSLI. At 167-178 the chain is on the cytoplasmic side; sequence SSYRLFSRFEAP.

This sequence belongs to the Casparian strip membrane proteins (CASP) family. Homodimer and heterodimers.

The protein localises to the cell membrane. This is CASP-like protein 2A2 from Arabidopsis lyrata subsp. lyrata (Lyre-leaved rock-cress).